The following is a 1940-amino-acid chain: Myosin-13 (1940 aa).

One can recognise a Myosin N-terminal SH3-like domain in the interval 33-82 (DSKKACFAMDDKEMYVKGMIQSRENDKVTVKTLDDRTLTLNSDQVFPMNP). The region spanning 86-782 (DKIEDMAMMT…LLGLLEEMRD (697 aa)) is the Myosin motor domain. N6,N6,N6-trimethyllysine is present on Lys130. 179 to 186 (GESGAGKT) is an ATP binding site. Actin-binding regions lie at residues 659-681 (LNKL…IPNE) and 761-775 (RFGH…GLLG). The 30-residue stretch at 785-814 (LVTLMTRTQAICRGYLMRVEFKKMMERRES) folds into the IQ domain. The stretch at 843 to 1940 (LLKSAEAERE…RDVGAQKMEE (1098 aa)) forms a coiled coil. Positions 1886–1940 (RQAEEAEEQANTQMSKCRRVQHELEEAEERADIAESQVNKLRAKSRDVGAQKMEE) are disordered. Over residues 1929-1940 (KSRDVGAQKMEE) the composition is skewed to basic and acidic residues.

Belongs to the TRAFAC class myosin-kinesin ATPase superfamily. Myosin family. As to quaternary structure, muscle myosin is a hexameric protein that consists of 2 heavy chain subunits (MHC), 2 alkali light chain subunits (MLC) and 2 regulatory light chain subunits (MLC-2).

The protein resides in the cytoplasm. It localises to the myofibril. Its function is as follows. Fast twitching myosin mediating the high-velocity and low-tension contractions of specific striated muscles. The chain is Myosin-13 (MYH13) from Canis lupus familiaris (Dog).